A 361-amino-acid chain; its full sequence is MAQNSLRLVEDKSVDKSKALEAALSQIERAFGKGSIMKLGAKDSVVEIETVSTGSLGLDIALGIGGLPKGRIVEIYGPESSGKTTLALQTIAEAQKKGGICGFVDAEHALDPIYARKLGVDLENLLISQPDTGEQALEITDTLVRSGAIDVLVVDSVAALVPRAEIEGEMGDSLPGMQARLMSQALRKLTASISKSNCMVIFINQIRMKIGVMFGSPETTTGGNALKFYASVRLDIRRIGSVKEREEVVGNQTRVKVVKNKMAPPFKQVEFDIMYGEGVSKTGELIDLGVKAGIVEKSGAWFSYNSQRLGQGRENAKLFLRDNPELLREIETALRQNAGLIADRFLENGGPESEGDEAADM.

Position 77–84 (77–84) interacts with ATP; that stretch reads GPESSGKT.

The protein belongs to the RecA family.

The protein localises to the cytoplasm. Can catalyze the hydrolysis of ATP in the presence of single-stranded DNA, the ATP-dependent uptake of single-stranded DNA by duplex DNA, and the ATP-dependent hybridization of homologous single-stranded DNAs. It interacts with LexA causing its activation and leading to its autocatalytic cleavage. The sequence is that of Protein RecA from Sinorhizobium medicae (strain WSM419) (Ensifer medicae).